The sequence spans 570 residues: Enhancer of polycomb-like protein 1 (570 aa).

Residues 541–570 are disordered; the sequence is ALNNLNSGQTSGQTMGSNPGPGAIAPTPET. Polar residues predominate over residues 543 to 557; that stretch reads NNLNSGQTSGQTMGS.

It belongs to the enhancer of polycomb family. In terms of assembly, component of the NuA4 histone acetyltransferase complex.

Its subcellular location is the nucleus. Its function is as follows. Component of the NuA4 histone acetyltransferase complex which is involved in transcriptional activation of selected genes principally by acetylation of nucleosomal histone H4 and H2A. The NuA4 complex is also involved in DNA repair. Involved in gene silencing by neighboring heterochromatin, blockage of the silencing spreading along the chromosome, and required for cell cycle progression through G2/M. This Emericella nidulans (strain FGSC A4 / ATCC 38163 / CBS 112.46 / NRRL 194 / M139) (Aspergillus nidulans) protein is Enhancer of polycomb-like protein 1 (epl1).